The following is a 125-amino-acid chain: Holo-[acyl-carrier-protein] synthase (125 aa).

Asp8 and Glu57 together coordinate Mg(2+).

It belongs to the P-Pant transferase superfamily. AcpS family. Mg(2+) serves as cofactor.

It is found in the cytoplasm. The enzyme catalyses apo-[ACP] + CoA = holo-[ACP] + adenosine 3',5'-bisphosphate + H(+). Transfers the 4'-phosphopantetheine moiety from coenzyme A to a Ser of acyl-carrier-protein. This is Holo-[acyl-carrier-protein] synthase from Solibacter usitatus (strain Ellin6076).